Here is a 597-residue protein sequence, read N- to C-terminus: Elongation factor 4 (597 aa).

The tr-type G domain maps to 2-184 (KHIRNFSIIA…TIVKSIPAPE (183 aa)). GTP is bound by residues 14 to 19 (DHGKST) and 131 to 134 (NKID).

It belongs to the TRAFAC class translation factor GTPase superfamily. Classic translation factor GTPase family. LepA subfamily.

The protein resides in the cell inner membrane. It catalyses the reaction GTP + H2O = GDP + phosphate + H(+). Functionally, required for accurate and efficient protein synthesis under certain stress conditions. May act as a fidelity factor of the translation reaction, by catalyzing a one-codon backward translocation of tRNAs on improperly translocated ribosomes. Back-translocation proceeds from a post-translocation (POST) complex to a pre-translocation (PRE) complex, thus giving elongation factor G a second chance to translocate the tRNAs correctly. Binds to ribosomes in a GTP-dependent manner. The chain is Elongation factor 4 from Aliivibrio fischeri (strain ATCC 700601 / ES114) (Vibrio fischeri).